A 327-amino-acid chain; its full sequence is rRNA 2'-O-methyltransferase fibrillarin (327 aa).

Positions 1 to 95 are disordered; that stretch reads MKPGFSPRGG…NQSGKNVMVE (95 aa). The segment covering 7-80 has biased composition (gly residues); the sequence is PRGGGFGGRG…GGNRGRGGGR (74 aa). Asymmetric dimethylarginine is present on residues Arg-8, Arg-15, Arg-21, Arg-24, Arg-28, and Arg-31. Glycyl lysine isopeptide (Lys-Gly) (interchain with G-Cter in SUMO2) cross-links involve residues Lys-90, Lys-108, and Lys-115. An N6-acetyllysine modification is found at Lys-108. Phosphoserine is present on Ser-122. Lys-127 bears the N6-acetyllysine mark. 2 positions are modified to phosphoserine: Ser-130 and Ser-132. Residues Lys-137, Lys-149, and Lys-164 each participate in a glycyl lysine isopeptide (Lys-Gly) (interchain with G-Cter in SUMO2) cross-link. Residues 178 to 179 and 197 to 198 each bind S-adenosyl-L-methionine; these read TT and EF. Residues Lys-211 and Lys-212 each carry the N6-acetyllysine modification. S-adenosyl-L-methionine is bound by residues 222 to 223 and 242 to 245; these read DA and DVAQ.

This sequence belongs to the methyltransferase superfamily. Fibrillarin family. As to quaternary structure, component of box C/D small nucleolar ribonucleoprotein (snoRNP) particles that contain SNU13, FBL, NOP5 and NOP56, plus a guide RNA. It is associated with the U3, U8, U13, X and Y small nuclear RNAs. Component of several ribosomal and nucleolar protein complexes. Part of the small subunit (SSU) processome, composed of more than 70 proteins and the RNA chaperone small nucleolar RNA (snoRNA) U3. Interacts with PRMT5 and UTP20. Interacts with DDX5 and C1QBP. Interacts with NOL11. Interacts with PIH1D1. Interacts with RRP1B. Interacts with NOLC1. Interacts with SDE2. Interacts with NOP2 and NOP56. In terms of processing, by homology to other fibrillarins, some or all of the N-terminal domain arginines are modified to asymmetric dimethylarginine (DMA). Post-translationally, ubiquitinated. Ubiquitination leads to proteasomal degradation. Deubiquitinated by USP36. Acetylated by CREBBP/CBP, preventing methylation of 'Gln-105' of histone H2A (H2AQ104me), without affecting rRNA methylation. Deacetylation by SIRT7 restores methylation of 'Gln-105' of histone H2A (H2AQ104me).

It is found in the nucleus. The protein localises to the nucleolus. The protein resides in the nucleoplasm. The enzyme catalyses L-glutaminyl-[histone H2A] + S-adenosyl-L-methionine = N(5)-methyl-L-glutaminyl-[histone H2A] + S-adenosyl-L-homocysteine + H(+). It carries out the reaction a ribonucleotide in rRNA + S-adenosyl-L-methionine = a 2'-O-methylribonucleotide in rRNA + S-adenosyl-L-homocysteine + H(+). The catalysed reaction is a ribonucleotide in U6 snRNA + S-adenosyl-L-methionine = a 2'-O-methylribonucleotide in U6 snRNA + S-adenosyl-L-homocysteine + H(+). Functionally, S-adenosyl-L-methionine-dependent methyltransferase that has the ability to methylate both RNAs and proteins. Involved in pre-rRNA processing by catalyzing the site-specific 2'-hydroxyl methylation of ribose moieties in pre-ribosomal RNA. Site specificity is provided by a guide RNA that base pairs with the substrate. Methylation occurs at a characteristic distance from the sequence involved in base pairing with the guide RNA. Probably catalyzes 2'-O-methylation of U6 snRNAs in box C/D RNP complexes. U6 snRNA 2'-O-methylation is required for mRNA splicing fidelity. Also acts as a protein methyltransferase by mediating methylation of 'Gln-105' of histone H2A (H2AQ104me), a modification that impairs binding of the FACT complex and is specifically present at 35S ribosomal DNA locus. Part of the small subunit (SSU) processome, first precursor of the small eukaryotic ribosomal subunit. During the assembly of the SSU processome in the nucleolus, many ribosome biogenesis factors, an RNA chaperone and ribosomal proteins associate with the nascent pre-rRNA and work in concert to generate RNA folding, modifications, rearrangements and cleavage as well as targeted degradation of pre-ribosomal RNA by the RNA exosome. This Mus musculus (Mouse) protein is rRNA 2'-O-methyltransferase fibrillarin.